Consider the following 1120-residue polypeptide: Isoleucine--tRNA ligase (1120 aa).

Residues Pro64–His74 carry the 'HIGH' region motif. The 'KMSKS' region signature appears at Lys647–Arg651. ATP is bound at residue Lys650.

This sequence belongs to the class-I aminoacyl-tRNA synthetase family. IleS type 2 subfamily. In terms of assembly, monomer. It depends on Zn(2+) as a cofactor.

It localises to the cytoplasm. The enzyme catalyses tRNA(Ile) + L-isoleucine + ATP = L-isoleucyl-tRNA(Ile) + AMP + diphosphate. Functionally, catalyzes the attachment of isoleucine to tRNA(Ile). As IleRS can inadvertently accommodate and process structurally similar amino acids such as valine, to avoid such errors it has two additional distinct tRNA(Ile)-dependent editing activities. One activity is designated as 'pretransfer' editing and involves the hydrolysis of activated Val-AMP. The other activity is designated 'posttransfer' editing and involves deacylation of mischarged Val-tRNA(Ile). The protein is Isoleucine--tRNA ligase of Ehrlichia canis (strain Jake).